Reading from the N-terminus, the 178-residue chain is MPGSALLCCLALLAGVKASQGTNTQSEDSCAHFPAGLPHMLRELRAAFGRVKTFFQTQDQLDNVLLNKSLLEDFKGYLGCQALSEMIQFYLVEVMPQAEKHGPEIKEHLNSLGEKLKTLRMRLRRCHRFLPCENKSKAVEQVKSDFNKLQDQGVYKAMNEFDIFINCIEAYMMIKMKS.

The signal sequence occupies residues 1 to 18; sequence MPGSALLCCLALLAGVKA. 2 cysteine pairs are disulfide-bonded: Cys30–Cys126 and Cys80–Cys132. N-linked (GlcNAc...) asparagine glycosylation is present at Asn67. A glycan (N-linked (GlcNAc...) asparagine) is linked at Asn134.

Belongs to the IL-10 family. Homodimer. Interacts with IL10RA and IL10RB.

Its subcellular location is the secreted. Functionally, major immune regulatory cytokine that acts on many cells of the immune system where it has profound anti-inflammatory functions, limiting excessive tissue disruption caused by inflammation. Mechanistically, IL10 binds to its heterotetrameric receptor comprising IL10RA and IL10RB leading to JAK1 and STAT2-mediated phosphorylation of STAT3. In turn, STAT3 translocates to the nucleus where it drives expression of anti-inflammatory mediators. Targets antigen-presenting cells (APCs) such as macrophages and monocytes and inhibits their release of pro-inflammatory cytokines including granulocyte-macrophage colony-stimulating factor /GM-CSF, granulocyte colony-stimulating factor/G-CSF, IL-1 alpha, IL-1 beta, IL-6, IL-8 and TNF-alpha. Also interferes with antigen presentation by reducing the expression of MHC-class II and co-stimulatory molecules, thereby inhibiting their ability to induce T cell activation. In addition, controls the inflammatory response of macrophages by reprogramming essential metabolic pathways including mTOR signaling. This is Interleukin-10 (IL10) from Cavia porcellus (Guinea pig).